The sequence spans 296 residues: Phosphatidylserine decarboxylase proenzyme (296 aa).

Residues aspartate 113, histidine 169, and serine 256 each act as charge relay system; for autoendoproteolytic cleavage activity in the active site. The Schiff-base intermediate with substrate; via pyruvic acid; for decarboxylase activity role is filled by serine 256. At serine 256 the chain carries Pyruvic acid (Ser); by autocatalysis.

The protein belongs to the phosphatidylserine decarboxylase family. PSD-B subfamily. Prokaryotic type II sub-subfamily. Heterodimer of a large membrane-associated beta subunit and a small pyruvoyl-containing alpha subunit. Pyruvate is required as a cofactor. Is synthesized initially as an inactive proenzyme. Formation of the active enzyme involves a self-maturation process in which the active site pyruvoyl group is generated from an internal serine residue via an autocatalytic post-translational modification. Two non-identical subunits are generated from the proenzyme in this reaction, and the pyruvate is formed at the N-terminus of the alpha chain, which is derived from the carboxyl end of the proenzyme. The autoendoproteolytic cleavage occurs by a canonical serine protease mechanism, in which the side chain hydroxyl group of the serine supplies its oxygen atom to form the C-terminus of the beta chain, while the remainder of the serine residue undergoes an oxidative deamination to produce ammonia and the pyruvoyl prosthetic group on the alpha chain. During this reaction, the Ser that is part of the protease active site of the proenzyme becomes the pyruvoyl prosthetic group, which constitutes an essential element of the active site of the mature decarboxylase.

The protein resides in the cell membrane. The catalysed reaction is a 1,2-diacyl-sn-glycero-3-phospho-L-serine + H(+) = a 1,2-diacyl-sn-glycero-3-phosphoethanolamine + CO2. The protein operates within phospholipid metabolism; phosphatidylethanolamine biosynthesis; phosphatidylethanolamine from CDP-diacylglycerol: step 2/2. Functionally, catalyzes the formation of phosphatidylethanolamine (PtdEtn) from phosphatidylserine (PtdSer). In Clostridium botulinum (strain Eklund 17B / Type B), this protein is Phosphatidylserine decarboxylase proenzyme.